We begin with the raw amino-acid sequence, 472 residues long: Sodium-coupled neutral amino acid transporter 5 (472 aa).

Met1 is subject to N-acetylmethionine. The Cytoplasmic portion of the chain corresponds to 1 to 48; the sequence is MELQDPKMNGALPSDAVGYRQEREGFLPSRGPAPGSKPVQFMDFEGKT. Residues 49-71 form a helical membrane-spanning segment; the sequence is SFGMSVFNLSNAIMGSGILGLAY. Residues 72-87 are Extracellular-facing; sequence AMAHTGVIFFLALLLC. A helical membrane pass occupies residues 88 to 108; that stretch reads IALLSSYSIHLLLTCAGIAGI. The Cytoplasmic segment spans residues 109 to 125; sequence RAYEQLGQRAFGPAGKV. Residues 126–146 traverse the membrane as a helical segment; that stretch reads VVATVICLHNVGAMSSYLFII. At 147-166 the chain is on the extracellular side; it reads KSELPLVIGTFLYMDPEGDW. The chain crosses the membrane as a helical span at residues 167-187; it reads FLKGNLLIIIVSVLIILPLAL. Over 188–192 the chain is Cytoplasmic; the sequence is MKHLG. The chain crosses the membrane as a helical span at residues 193–213; it reads YLGYTSGLSLTCMLFFLVSVI. Topologically, residues 214–257 are extracellular; it reads YKKFQLGCAIGHNETAMESEALVGLPSQGLNSSCEAQMFTVDSQ. Cys221 and Cys247 are joined by a disulfide. An N-linked (GlcNAc...) asparagine glycan is attached at Asn226. Residues 258–278 form a helical membrane-spanning segment; that stretch reads MSYTVPIMAFAFVCHPEVLPI. Topologically, residues 279-295 are cytoplasmic; it reads YTELCRPSKRRMQAVAN. The chain crosses the membrane as a helical span at residues 296-316; sequence VSIGAMFCMYGLTATFGYLTF. Residues 317-334 lie on the Extracellular side of the membrane; the sequence is YSSVKAEMLHMYSQKDPL. The helical transmembrane segment at 335 to 355 threads the bilayer; it reads ILCVRLAVLLAVTLTVPVVLF. Over 356 to 376 the chain is Cytoplasmic; the sequence is PIRRALQQLLFPGKAFSWPRH. Residues 377–397 form a helical membrane-spanning segment; sequence VAIALILLVLVNVLVICVPTI. Over 398-399 the chain is Extracellular; that stretch reads RD. A helical membrane pass occupies residues 400–420; the sequence is IFGVIGSTSAPSLIFILPSIF. Topologically, residues 421-439 are cytoplasmic; it reads YLRIVPSEVEPFLSWPKIQ. A helical membrane pass occupies residues 440–460; the sequence is ALCFGVLGVLFMAVSLGFMFA. Over 461–472 the chain is Extracellular; the sequence is NWATGQSRMSGH.

The protein belongs to the amino acid/polyamine transporter 2 family. Predominantly expressed in stomach, brain, liver, lung and intestinal tract.

The protein localises to the cell membrane. The catalysed reaction is L-serine(out) + Na(+)(out) + H(+)(in) = L-serine(in) + Na(+)(in) + H(+)(out). It catalyses the reaction L-alanine(out) + Na(+)(out) + H(+)(in) = L-alanine(in) + Na(+)(in) + H(+)(out). It carries out the reaction glycine(out) + Na(+)(out) + H(+)(in) = glycine(in) + Na(+)(in) + H(+)(out). The enzyme catalyses L-glutamine(out) + Na(+)(out) + H(+)(in) = L-glutamine(in) + Na(+)(in) + H(+)(out). The catalysed reaction is L-asparagine(out) + Na(+)(out) + H(+)(in) = L-asparagine(in) + Na(+)(in) + H(+)(out). It catalyses the reaction L-histidine(out) + Na(+)(out) + H(+)(in) = L-histidine(in) + Na(+)(in) + H(+)(out). It carries out the reaction L-cysteine(out) + Na(+)(out) + H(+)(in) = L-cysteine(in) + Na(+)(in) + H(+)(out). Not inhibited by lithium. Partial allosteric regulation on ions sodium binding. Functionally, symporter that cotransports neutral amino acids and sodium ions, coupled to an H(+) antiporter activity. Releases L-glutamine and glycine from astroglial cells and may participate in the glutamate/GABA-L-glutamine cycle and the NMDA receptors activation. In addition, contributes significantly to L-glutamine uptake in retina, namely in ganglion and Mueller cells therefore, participates in the retinal glutamate-glutamine cycle. The transport activity is pH sensitive and Li(+) tolerant. Moreover functions in both direction and is associated with large uncoupled fluxes of protons. The transport is electroneutral coupled to the cotransport of 1 Na(+) and the antiport of 1 H(+). May have a particular importance for modulation of net hepatic glutamine flux. This Homo sapiens (Human) protein is Sodium-coupled neutral amino acid transporter 5 (SLC38A5).